Consider the following 397-residue polypeptide: Elongation factor Tu 2 (397 aa).

Residues 10–206 (KPHVNIGTIG…AIDTWIPEPV (197 aa)) enclose the tr-type G domain. Residues 19 to 26 (GHVDHGKT) form a G1 region. Residue 19–26 (GHVDHGKT) coordinates GTP. Thr26 serves as a coordination point for Mg(2+). Residues 61 to 65 (GITIS) form a G2 region. The tract at residues 82 to 85 (DCPG) is G3. Residues 82 to 86 (DCPGH) and 137 to 140 (NKCD) contribute to the GTP site. The segment at 137–140 (NKCD) is G4. Residues 175 to 177 (SAL) form a G5 region.

Belongs to the TRAFAC class translation factor GTPase superfamily. Classic translation factor GTPase family. EF-Tu/EF-1A subfamily. As to quaternary structure, monomer.

It is found in the cytoplasm. The catalysed reaction is GTP + H2O = GDP + phosphate + H(+). In terms of biological role, GTP hydrolase that promotes the GTP-dependent binding of aminoacyl-tRNA to the A-site of ribosomes during protein biosynthesis. The polypeptide is Elongation factor Tu 2 (Alkaliphilus metalliredigens (strain QYMF)).